Reading from the N-terminus, the 587-residue chain is Cryptochrome-1 (587 aa).

The region spanning 3–132 (VNAVHWFRKG…EVIVRISHTL (130 aa)) is the Photolyase/cryptochrome alpha/beta domain. Lys-11 participates in a covalent cross-link: Glycyl lysine isopeptide (Lys-Gly) (interchain with G-Cter in ubiquitin). Residues 50–54 (NRWRF) carry the LIR 1 motif. Ser-71 carries the post-translational modification Phosphoserine; by AMPK. The short motif at 82–87 (DVFPRL) is the LIR 2 element. Residue Lys-107 forms a Glycyl lysine isopeptide (Lys-Gly) (interchain with G-Cter in ubiquitin) linkage. An LIR 3 motif is present at residues 151–156 (KRFQTL). Residue Lys-159 forms a Glycyl lysine isopeptide (Lys-Gly) (interchain with G-Cter in ubiquitin) linkage. Ser-247 is modified (phosphoserine; by MAPK). Residue Ser-252 coordinates FAD. 2 consecutive short sequence motifs (LIR) follow at residues 255-260 (LRFGCL) and 271-276 (DLYKKV). Ser-280 carries the post-translational modification Phosphoserine; by AMPK. Residues 285–290 (SLYGQL) carry the LIR 6 motif. Gln-289 serves as a coordination point for FAD. A Glycyl lysine isopeptide (Lys-Gly) (interchain with G-Cter in ubiquitin) cross-link involves residue Lys-329. The short motif at 335–339 (TGFPW) is the LIR 7 element. His-355 contributes to the FAD binding site. The interval 371-470 (WISWEEGMKV…LIGVNYPKPM (100 aa)) is required for inhibition of CLOCK-BMAL1-mediated transcription. Positions 379–384 (KVFEEL) match the LIR 8 motif. 387-389 (DAD) lines the FAD pocket. 3 short sequence motifs (LIR) span residues 395–400 (GSWMWL), 411–416 (HCYCPV), and 430–435 (RRYLPV). The interval 471–493 (VNHAEASRLNIERMKQIYQQLSR) is interaction with TIMELESS. Lys-485 participates in a covalent cross-link: Glycyl lysine isopeptide (Lys-Gly) (interchain with G-Cter in ubiquitin). 2 consecutive short sequence motifs (LIR) follow at residues 486–491 (QIYQQL) and 492–497 (SRYRGL). Residues 554–587 (GSSSMGHGLSNGKRPSQEEDTQSIGPKVQRQSTN) form a disordered region. At Ser-569 the chain carries Phosphoserine.

Belongs to the DNA photolyase class-1 family. As to quaternary structure, component of the circadian core oscillator, which includes the CRY proteins, CLOCK or NPAS2, BMAL1 or BMAL2, CSNK1D and/or CSNK1E, TIMELESS, and the PER proteins. Interacts directly with TIMELESS. Interacts directly with PER1, PER2 and PER3; interaction with PER2 inhibits its ubiquitination and vice versa. Interacts with FBXL21. Interacts with FBXL3. Interacts with CLOCK-BMAL1 independently of PER2 and DNA. Interacts with HDAC1, HDAC2 and SIN3B. Interacts with nuclear receptors AR, NR1D1, NR3C1/GR, RORA and RORC; the interaction with at least NR3C1/GR is ligand dependent. Interacts with PRKDC. Interacts with the G protein subunit alpha GNAS; the interaction may block GPCR-mediated regulation of cAMP concentrations. Interacts with PRMT5. Interacts with EZH2. Interacts with MYBBP1A, DOCK7, HNRNPU, RPL7A, RPL8 and RPS3. Interacts with PPP5C (via TPR repeats). Interacts with MAP1LC3B. Interacts with CLOCK. Interacts with BMAL1. Interacts weakly with HDAC3; this interaction is enhanced in the presence of FBXL3. Interacts with TRIM28, KCTD5 and DDB1 Interacts with HNF4A. Interacts with PSMD2 in a KDM8-dependent manner. Interacts with KDM8 in a FBXL3-dependent manner. Interacts with PPARG in a ligand-dependent manner. Interacts with PPARD (via domain NR LBD) and NR1I2 (via domain NR LBD) in a ligand-dependent manner. Interacts with PPARA, NR1I3 and VDR. Requires FAD as cofactor. (6R)-5,10-methylene-5,6,7,8-tetrahydrofolate serves as cofactor. Post-translationally, phosphorylation on Ser-247 by MAPK is important for the inhibition of CLOCK-BMAL1-mediated transcriptional activity. Phosphorylation by CSNK1E requires interaction with PER1 or PER2. Phosphorylation at Ser-71 and Ser-280 by AMPK decreases protein stability. Phosphorylation at Ser-569 exhibits a robust circadian rhythm with a peak at CT8, increases protein stability, prevents SCF(FBXL3)-mediated degradation and is antagonized by interaction with PRKDC. In terms of processing, ubiquitinated by the SCF(FBXL3) and SCF(FBXL21) complexes, regulating the balance between degradation and stabilization. The SCF(FBXL3) complex is mainly nuclear and mediates ubiquitination and subsequent degradation of CRY1. In contrast, cytoplasmic SCF(FBXL21) complex-mediated ubiquitination leads to stabilize CRY1 and counteract the activity of the SCF(FBXL3) complex. The SCF(FBXL3) and SCF(FBXL21) complexes probably mediate ubiquitination at different Lys residues. Ubiquitination at Lys-11 and Lys-107 are specifically ubiquitinated by the SCF(FBXL21) complex but not by the SCF(FBXL3) complex. Ubiquitination may be inhibited by PER2. Deubiquitinated by USP7. Undergoes autophagy-mediated degradation in the liver in a time-dependent manner. Autophagic degradation of CRY1 (an inhibitor of gluconeogenesis) occurs during periods of reduced feeding allowing induction of gluconeogenesis and maintenance of blood glucose levels. As to expression, expressed in all tissues tested including spleen, liver, skeletal muscle, kidney, brain, intestine, eye, harderian gland, liver and heart. Highest levels in the eye, brain, kidney and harderian gland. In the brain, especially located to the suprachiasma nucleus (SCN).

It is found in the cytoplasm. The protein resides in the nucleus. Its function is as follows. Transcriptional repressor which forms a core component of the circadian clock. The circadian clock, an internal time-keeping system, regulates various physiological processes through the generation of approximately 24 hour circadian rhythms in gene expression, which are translated into rhythms in metabolism and behavior. It is derived from the Latin roots 'circa' (about) and 'diem' (day) and acts as an important regulator of a wide array of physiological functions including metabolism, sleep, body temperature, blood pressure, endocrine, immune, cardiovascular, and renal function. Consists of two major components: the central clock, residing in the suprachiasmatic nucleus (SCN) of the brain, and the peripheral clocks that are present in nearly every tissue and organ system. Both the central and peripheral clocks can be reset by environmental cues, also known as Zeitgebers (German for 'timegivers'). The predominant Zeitgeber for the central clock is light, which is sensed by retina and signals directly to the SCN. The central clock entrains the peripheral clocks through neuronal and hormonal signals, body temperature and feeding-related cues, aligning all clocks with the external light/dark cycle. Circadian rhythms allow an organism to achieve temporal homeostasis with its environment at the molecular level by regulating gene expression to create a peak of protein expression once every 24 hours to control when a particular physiological process is most active with respect to the solar day. Transcription and translation of core clock components (CLOCK, NPAS2, BMAL1, BMAL2, PER1, PER2, PER3, CRY1 and CRY2) plays a critical role in rhythm generation, whereas delays imposed by post-translational modifications (PTMs) are important for determining the period (tau) of the rhythms (tau refers to the period of a rhythm and is the length, in time, of one complete cycle). A diurnal rhythm is synchronized with the day/night cycle, while the ultradian and infradian rhythms have a period shorter and longer than 24 hours, respectively. Disruptions in the circadian rhythms contribute to the pathology of cardiovascular diseases, cancer, metabolic syndromes and aging. A transcription/translation feedback loop (TTFL) forms the core of the molecular circadian clock mechanism. Transcription factors, CLOCK or NPAS2 and BMAL1 or BMAL2, form the positive limb of the feedback loop, act in the form of a heterodimer and activate the transcription of core clock genes and clock-controlled genes (involved in key metabolic processes), harboring E-box elements (5'-CACGTG-3') within their promoters. The core clock genes: PER1/2/3 and CRY1/2 which are transcriptional repressors form the negative limb of the feedback loop and interact with the CLOCK|NPAS2-BMAL1|BMAL2 heterodimer inhibiting its activity and thereby negatively regulating their own expression. This heterodimer also activates nuclear receptors NR1D1/2 and RORA/B/G, which form a second feedback loop and which activate and repress BMAL1 transcription, respectively. CRY1 and CRY2 have redundant functions but also differential and selective contributions at least in defining the pace of the SCN circadian clock and its circadian transcriptional outputs. More potent transcriptional repressor in cerebellum and liver than CRY2, though more effective in lengthening the period of the SCN oscillator. On its side, CRY2 seems to play a critical role in tuning SCN circadian period by opposing the action of CRY1. With CRY2, is dispensable for circadian rhythm generation but necessary for the development of intercellular networks for rhythm synchrony. Capable of translocating circadian clock core proteins such as PER proteins to the nucleus. Interacts with CLOCK-BMAL1 independently of PER proteins and is found at CLOCK-BMAL1-bound sites, suggesting that CRY may act as a molecular gatekeeper to maintain CLOCK-BMAL1 in a poised and repressed state until the proper time for transcriptional activation. Represses the CLOCK-BMAL1 induced transcription of BHLHE40/DEC1, ATF4, MTA1, KLF10 and NAMPT. May repress circadian target genes expression in collaboration with HDAC1 and HDAC2 through histone deacetylation. Mediates the clock-control activation of ATR and modulates ATR-mediated DNA damage checkpoint. In liver, mediates circadian regulation of cAMP signaling and gluconeogenesis by binding to membrane-coupled G proteins and blocking glucagon-mediated increases in intracellular cAMP concentrations and CREB1 phosphorylation. Inhibits hepatic gluconeogenesis by decreasing nuclear FOXO1 levels that down-regulates gluconeogenic gene expression. Besides its role in the maintenance of the circadian clock, is also involved in the regulation of other processes. Represses glucocorticoid receptor NR3C1/GR-induced transcriptional activity by binding to glucocorticoid response elements (GREs). Plays a key role in glucose and lipid metabolism modulation, in part, through the transcriptional regulation of genes involved in these pathways, such as LEP or ACSL4. Represses PPARD and its target genes in the skeletal muscle and limits exercise capacity. Plays an essential role in the generation of circadian rhythms in the retina. Represses the transcriptional activity of NR1I2. In Spalax judaei (Judean Mountains blind mole rat), this protein is Cryptochrome-1 (CRY1).